The sequence spans 261 residues: Pimeloyl-[acyl-carrier protein] methyl ester esterase (261 aa).

The AB hydrolase-1 domain occupies 16-241 (LVLLHGWGLN…HAAHAPFISH (226 aa)). Substrate is bound by residues Trp22, 82–83 (SL), and 143–147 (FLALQ). Catalysis depends on Ser82, which acts as the Nucleophile. Residues Asp207 and His235 contribute to the active site. His235 contacts substrate.

This sequence belongs to the AB hydrolase superfamily. Carboxylesterase BioH family. In terms of assembly, monomer.

The protein localises to the cytoplasm. It catalyses the reaction 6-carboxyhexanoyl-[ACP] methyl ester + H2O = 6-carboxyhexanoyl-[ACP] + methanol + H(+). Its pathway is cofactor biosynthesis; biotin biosynthesis. The physiological role of BioH is to remove the methyl group introduced by BioC when the pimeloyl moiety is complete. It allows to synthesize pimeloyl-ACP via the fatty acid synthetic pathway through the hydrolysis of the ester bonds of pimeloyl-ACP esters. This chain is Pimeloyl-[acyl-carrier protein] methyl ester esterase, found in Photorhabdus laumondii subsp. laumondii (strain DSM 15139 / CIP 105565 / TT01) (Photorhabdus luminescens subsp. laumondii).